A 118-amino-acid chain; its full sequence is Large ribosomal subunit protein bL20 (118 aa).

The protein belongs to the bacterial ribosomal protein bL20 family.

Binds directly to 23S ribosomal RNA and is necessary for the in vitro assembly process of the 50S ribosomal subunit. It is not involved in the protein synthesizing functions of that subunit. This chain is Large ribosomal subunit protein bL20, found in Proteus mirabilis (strain HI4320).